A 901-amino-acid chain; its full sequence is Putative receptor protein kinase CRINKLY4 (901 aa).

Residues 1 to 24 (MDHVPALVLAGCCFLALLPGWACG) form the signal peptide. Residues 25 to 423 (LGSMSSIAVS…SRKLMAFQMR (399 aa)) are Extracellular-facing. Tandem repeats lie at residues 33–68 (VSYGEDGPVFCGLNSDGSHLVACFGADASVLYGAPP), 72–107 (FLGLTAGDGFVCGLLLDTRQPYCWGSNSYVKSGVPQ), 125–160 (LCALRAAQDGGRGSSAATSLIDCWGYNMTATHAVDE), 162–195 (VSTVSAGSVFNCGLFARNRTVFCWGDETVSGVVG), 203–236 (FQSIGAGGYHVCGVLENAQVFCWGRSLEMQQVVP), 253–287 (MSTVVGGRFHACGIRSLDHQVACWGFTLHNSTSPP), and 292–330 (MYALVAGDYFTCGVPAETSLMPRCWGNSGPLALPMAVPP). Residues 33–330 (VSYGEDGPVF…PLALPMAVPP (298 aa)) form a 7 X 36 AA repeats region. Asn151 and Asn179 each carry an N-linked (GlcNAc...) asparagine glycan. An N-linked (GlcNAc...) asparagine glycan is attached at Asn282. 3 cysteine pairs are disulfide-bonded: Cys338-Cys365, Cys368-Cys382, and Cys372-Cys390. One copy of the TNFR-Cys repeat lies at 357 to 391 (CKPANSRLCLPCSTGCPEGLYESSPCNATADRVCQ). N-linked (GlcNAc...) asparagine glycosylation occurs at Asn383. The chain crosses the membrane as a helical span at residues 424 to 444 (IFVAEIVFAVVLVLSVSVTTC). At 445–901 (LYVRHKLRHC…QENLYLQHNF (457 aa)) the chain is on the cytoplasmic side. The Protein kinase domain occupies 505-712 (FSEDSQVGKG…EILSGRKAID (208 aa)). ATP contacts are provided by residues 511–519 (VGKGSFSCV) and Lys533. Asp634 (proton acceptor) is an active-site residue. Residues 845–876 (VTSSQRRKSSASEADIVGRRATDGRNVGSSIG) form a disordered region.

The protein belongs to the protein kinase superfamily. Ser/Thr protein kinase family. In terms of assembly, homodimer.

It localises to the cell membrane. Its subcellular location is the endosome. The protein localises to the multivesicular body membrane. It catalyses the reaction L-seryl-[protein] + ATP = O-phospho-L-seryl-[protein] + ADP + H(+). The enzyme catalyses L-threonyl-[protein] + ATP = O-phospho-L-threonyl-[protein] + ADP + H(+). In terms of biological role, putative receptor protein kinase. Could play a role in a differentiation signal. The CRINKLY4 (CR4) mutation affects leaf epidermis differentiation such that cell size and morphology are altered, and surface functions are compromised, allowing graft-like fusions between organs. In Zea mays (Maize), this protein is Putative receptor protein kinase CRINKLY4 (CR4).